Consider the following 708-residue polypeptide: Ribosomal RNA large subunit methyltransferase K/L (708 aa).

A THUMP domain is found at 43-154 (QGYQITLWTR…RGKITIGINF (112 aa)).

This sequence belongs to the methyltransferase superfamily. RlmKL family.

It localises to the cytoplasm. It catalyses the reaction guanosine(2445) in 23S rRNA + S-adenosyl-L-methionine = N(2)-methylguanosine(2445) in 23S rRNA + S-adenosyl-L-homocysteine + H(+). The catalysed reaction is guanosine(2069) in 23S rRNA + S-adenosyl-L-methionine = N(2)-methylguanosine(2069) in 23S rRNA + S-adenosyl-L-homocysteine + H(+). Functionally, specifically methylates the guanine in position 2445 (m2G2445) and the guanine in position 2069 (m7G2069) of 23S rRNA. The chain is Ribosomal RNA large subunit methyltransferase K/L from Shewanella amazonensis (strain ATCC BAA-1098 / SB2B).